A 349-amino-acid polypeptide reads, in one-letter code: Selenide, water dikinase (349 aa).

Cys-17 is a catalytic residue. ATP-binding positions include Lys-20 and 48-50; that span reads MAD. Asp-51 is a Mg(2+) binding site. ATP is bound by residues Asp-68, Asp-91, and 139–141; that span reads GHS. Position 91 (Asp-91) interacts with Mg(2+). Asp-227 serves as a coordination point for Mg(2+).

Belongs to the selenophosphate synthase 1 family. Class I subfamily. Homodimer. The cofactor is Mg(2+).

It carries out the reaction hydrogenselenide + ATP + H2O = selenophosphate + AMP + phosphate + 2 H(+). In terms of biological role, synthesizes selenophosphate from selenide and ATP. The protein is Selenide, water dikinase of Rhizobium meliloti (strain 1021) (Ensifer meliloti).